A 496-amino-acid chain; its full sequence is Pseudooxynicotine dehydrogenase (496 aa).

The tat-type signal signal peptide spans 1–42 (MTKDGDEGSKSGVSRRKFLGSAAVGVATAGIASQLLTLSAPA). Residues Ala69, Glu88, Arg96, Trp113, Val285, Ser461, and Ile471 each coordinate FAD.

It belongs to the flavin monoamine oxidase family. As to quaternary structure, homodimer. FAD serves as cofactor. In terms of processing, predicted to be exported by the Tat system. The position of the signal peptide cleavage has not been experimentally proven.

The protein localises to the periplasm. It catalyses the reaction pseudooxynicotine + 2 Fe(III)-[cytochrome c] + H2O = 4-oxo-4-(pyridin-3-yl)butanal + methylamine + 2 Fe(II)-[cytochrome c] + 2 H(+). It functions in the pathway alkaloid degradation; nicotine degradation. With respect to regulation, strongly inhibited by Na(2)MoO(4) and FeCl(3). Activity is nearly twice as high in the presence of Na(2)WO(4). Its function is as follows. Involved in nicotine degradation. Catalyzes the deamination of pseudooxynicotine to 3-succinoylsemialdehyde-pyridine. Functions as a dehydrogenase that uses the c-type cytochrome protein CycN as the physiological electron acceptor. O(2) is a poor electron acceptor. Pnao is oxidized by CycN 230 times faster than O(2) at equivalent oxidant concentrations. In Pseudomonas putida (strain DSM 28022 / S16), this protein is Pseudooxynicotine dehydrogenase.